The sequence spans 328 residues: Malate dehydrogenase (328 aa).

12–18 contacts NAD(+); that stretch reads GAAGQIA. Substrate is bound by residues Arg-93 and Arg-99. Residues Asn-106, Gln-113, and 130 to 132 contribute to the NAD(+) site; that span reads VGN. Positions 132 and 163 each coordinate substrate. The active-site Proton acceptor is His-188.

This sequence belongs to the LDH/MDH superfamily. MDH type 2 family.

The catalysed reaction is (S)-malate + NAD(+) = oxaloacetate + NADH + H(+). Catalyzes the reversible oxidation of malate to oxaloacetate. The polypeptide is Malate dehydrogenase (Burkholderia ambifaria (strain ATCC BAA-244 / DSM 16087 / CCUG 44356 / LMG 19182 / AMMD) (Burkholderia cepacia (strain AMMD))).